A 174-amino-acid polypeptide reads, in one-letter code: NADH-quinone oxidoreductase subunit B 2 (174 aa).

C53, C54, C118, and C148 together coordinate [4Fe-4S] cluster.

It belongs to the complex I 20 kDa subunit family. NDH-1 is composed of 14 different subunits. Subunits NuoB, C, D, E, F, and G constitute the peripheral sector of the complex. It depends on [4Fe-4S] cluster as a cofactor.

The protein resides in the cell inner membrane. It catalyses the reaction a quinone + NADH + 5 H(+)(in) = a quinol + NAD(+) + 4 H(+)(out). NDH-1 shuttles electrons from NADH, via FMN and iron-sulfur (Fe-S) centers, to quinones in the respiratory chain. Couples the redox reaction to proton translocation (for every two electrons transferred, four hydrogen ions are translocated across the cytoplasmic membrane), and thus conserves the redox energy in a proton gradient. The chain is NADH-quinone oxidoreductase subunit B 2 from Cereibacter sphaeroides (strain ATCC 17025 / ATH 2.4.3) (Rhodobacter sphaeroides).